Consider the following 288-residue polypeptide: Beta-lactamase PSE-4 (288 aa).

The signal sequence occupies residues 1–17; the sequence is MKFLLAFSLLIPSVVFA. The Acyl-ester intermediate role is filled by Ser65. The cysteines at positions 72 and 118 are disulfide-linked. Residue 229 to 231 participates in substrate binding; the sequence is RSG.

The protein belongs to the class-A beta-lactamase family.

The catalysed reaction is a beta-lactam + H2O = a substituted beta-amino acid. Functionally, hydrolyzes both carbenicillin and oxacillin. The chain is Beta-lactamase PSE-4 (pse4) from Pseudomonas aeruginosa.